The sequence spans 495 residues: Zinc finger and SCAN domain-containing protein 5B (495 aa).

Residues 1-40 (MAANWTLSWGQGGPCNSPGSDTPRSVASPETQLGNHDRNP) are disordered. Polar residues predominate over residues 17–34 (SPGSDTPRSVASPETQLG). The region spanning 44-126 (HMNFRMFSCP…DLLRNNRRPK (83 aa)) is the SCAN box domain. Disordered regions lie at residues 150–183 (APAS…RREQ) and 227–347 (ENRE…PDGQ). The segment covering 161–173 (VSSQWASSVNQMH) has biased composition (polar residues). Positions 250–262 (RAKEGKEPQKRAS) are enriched in basic and acidic residues. A compositionally biased stretch (polar residues) spans 292 to 310 (NLSSPKRSKPDASSISQEE). 5 consecutive C2H2-type zinc fingers follow at residues 355 to 377 (FACD…RRSH), 383 to 405 (FQCD…QRVH), 411 to 433 (YMCD…KRIH), 439 to 461 (FKCK…QRTH), and 467 to 489 (YKCP…LKTH).

Its subcellular location is the nucleus. Functionally, may be involved in transcriptional regulation. In Homo sapiens (Human), this protein is Zinc finger and SCAN domain-containing protein 5B (ZSCAN5B).